Here is a 241-residue protein sequence, read N- to C-terminus: Octanoyltransferase (241 aa).

Residues 38–227 (AGGPDTLLLL…AVCNALDGAL (190 aa)) form the BPL/LPL catalytic domain. Substrate-binding positions include 85–92 (RGGKITWH), 157–159 (AIG), and 170–172 (GFA). Cys-188 serves as the catalytic Acyl-thioester intermediate.

It belongs to the LipB family.

The protein resides in the cytoplasm. The enzyme catalyses octanoyl-[ACP] + L-lysyl-[protein] = N(6)-octanoyl-L-lysyl-[protein] + holo-[ACP] + H(+). The protein operates within protein modification; protein lipoylation via endogenous pathway; protein N(6)-(lipoyl)lysine from octanoyl-[acyl-carrier-protein]: step 1/2. In terms of biological role, catalyzes the transfer of endogenously produced octanoic acid from octanoyl-acyl-carrier-protein onto the lipoyl domains of lipoate-dependent enzymes. Lipoyl-ACP can also act as a substrate although octanoyl-ACP is likely to be the physiological substrate. The polypeptide is Octanoyltransferase (Mycobacterium ulcerans (strain Agy99)).